We begin with the raw amino-acid sequence, 230 residues long: UPF0173 metal-dependent hydrolase RHOS4_08540 (230 aa).

It belongs to the UPF0173 family.

This is UPF0173 metal-dependent hydrolase RHOS4_08540 from Cereibacter sphaeroides (strain ATCC 17023 / DSM 158 / JCM 6121 / CCUG 31486 / LMG 2827 / NBRC 12203 / NCIMB 8253 / ATH 2.4.1.) (Rhodobacter sphaeroides).